A 182-amino-acid chain; its full sequence is Hexose transport activator protein (182 aa).

Residues 46 to 65 (GIWGPMEKKPGGVGKKKGSE) are disordered.

Multicopy expression suppresses glucose-uptake defects in various yeast mutants. The polypeptide is Hexose transport activator protein (AHT1) (Saccharomyces cerevisiae (strain ATCC 204508 / S288c) (Baker's yeast)).